The chain runs to 44 residues: uncharacterized protein (44 aa).

The helical transmembrane segment at 6 to 26 (SILIRGGGGVLIVLILLLWIV) threads the bilayer.

The protein resides in the membrane. This is an uncharacterized protein from Ornithodoros (relapsing fever ticks).